We begin with the raw amino-acid sequence, 377 residues long: Dual-specificity RNA methyltransferase RlmN (377 aa).

Residue E102 is the Proton acceptor of the active site. The Radical SAM core domain occupies 108-345; that stretch reads EPDRRTLCVS…AVVRKNRGGD (238 aa). A disulfide bond links C115 and C350. Residues C122, C126, and C129 each coordinate [4Fe-4S] cluster. Residues 177–178, S209, 231–233, and N307 each bind S-adenosyl-L-methionine; these read GE and SLN. The S-methylcysteine intermediate role is filled by C350. Positions 354-377 are disordered; sequence AAEGGPGDPRRPAPPPLTRLPAAG.

It belongs to the radical SAM superfamily. RlmN family. It depends on [4Fe-4S] cluster as a cofactor.

It localises to the cytoplasm. It catalyses the reaction adenosine(2503) in 23S rRNA + 2 reduced [2Fe-2S]-[ferredoxin] + 2 S-adenosyl-L-methionine = 2-methyladenosine(2503) in 23S rRNA + 5'-deoxyadenosine + L-methionine + 2 oxidized [2Fe-2S]-[ferredoxin] + S-adenosyl-L-homocysteine. The catalysed reaction is adenosine(37) in tRNA + 2 reduced [2Fe-2S]-[ferredoxin] + 2 S-adenosyl-L-methionine = 2-methyladenosine(37) in tRNA + 5'-deoxyadenosine + L-methionine + 2 oxidized [2Fe-2S]-[ferredoxin] + S-adenosyl-L-homocysteine. Its function is as follows. Specifically methylates position 2 of adenine 2503 in 23S rRNA and position 2 of adenine 37 in tRNAs. m2A2503 modification seems to play a crucial role in the proofreading step occurring at the peptidyl transferase center and thus would serve to optimize ribosomal fidelity. This chain is Dual-specificity RNA methyltransferase RlmN, found in Anaeromyxobacter sp. (strain Fw109-5).